An 83-amino-acid polypeptide reads, in one-letter code: MKASMFLALAGLVLLFVVCYASESEEKEFPRELISKIFTVDDFKGEERECKGFGKSCVPGKNECCSGYACNSRDKWCKVLLGK.

Positions M1–A21 are cleaved as a signal peptide. A propeptide spanning residues S22–R48 is cleaved from the precursor. Disulfide bonds link C50–C65, C57–C70, and C64–C77. L81 bears the Leucine amide mark.

It belongs to the neurotoxin 10 (Hwtx-1) family. 14 (Hntx-1) subfamily. Monomer. As to expression, expressed by the venom gland.

The protein resides in the secreted. Functionally, weakly blocks the rat SCN2A/SCN1B (Nav1.2/beta-1) sodium channel (IC(50)=68 uM) and the insect sodium channel para/tipE (IC(50)=4.3 uM), without altering the activation or inactivation kinetics (depressant toxin). This chain is Mu-theraphotoxin-Hhn2b 2, found in Cyriopagopus hainanus (Chinese bird spider).